The sequence spans 602 residues: MDFTTLQNDFTNDYQKALIANNEFLEAKKYYNGNQLPQDVLNIILERGQTPIIENMFKVIVNKILGYKIESISEIRLSPKQEEDRALSDLLNSLLQVFIQQENYDKSMIERDKNLLIGGLGVIQLWVSQDKDKNVEIEIKAIKPESFVIDYFSTDKNALDARRFHKMLEVSEQEALLLFGDSVIVNYSNVNHERIASVIESWYKEYNEETQSYEWNRYLWNRNTGIYKSEKKPFKNGACPFIVSKLYTDELNNYYGLFRDIKPMQDFINYAENRMGNMMGSFKAMFEEDAVVDVAEFVETMSLDNAIAKVRPNALKDHKIQFMNNQADLSALSQKAEQKRQLLRLLAGLNDESLGMAVNRQSGVAIAQRKESGLMGLQTFLKATDDMDRLIFRLAVSFICEYFTKEQVFKIVDKKLGDRYFKINSNDDNKIRPLKFDLILKSQLKTESRDEKWYNWNELLKILAPIRPDLVPSLVPLMLNDMDSPITNDVLEAIQNANALQQQNAEANAPYNQQIQALQIQKLQAEIMELQAKAHKYAEQGALSQTTNESEKINQAVAITEMQQQNANNANNEESNNKPKKKLKTSDKTTWRKYPSAQNLDY.

Coiled-coil stretches lie at residues 324–352 (NNQA…LNDE) and 486–542 (ITND…EQGA). The disordered stretch occupies residues 567–602 (ANNANNEESNNKPKKKLKTSDKTTWRKYPSAQNLDY).

Homododecamer.

The protein resides in the virion. Functionally, forms the portal vertex of the capsid. This portal plays critical roles in head assembly, genome packaging, neck/tail attachment, and genome ejection. The portal protein multimerizes as a single ring-shaped homododecamer arranged around a central channel. The polypeptide is Portal protein (Helicobacter pylori bacteriophage KHP30).